Here is a 431-residue protein sequence, read N- to C-terminus: MEKTVKKVKRIEGSLRVPSDKSISHRAIILSSLADGTSIVKNFLKAGDTLTTVNAYRKLGVEIVEKEGVYYVHGKGLDGLKEPDDLLDMGNSGTTTRLTLGVLAGFDFFAALTGDDSLRKRPMKRVAEPLSKMGAKIDGRKDGNLLPISIRGGKLTGIDFFNEKMSAQVKSAILLAGLFAKGDTTVIEPVISRDHTENMLNSMGAYVSREFTKDGYRVTVKKADKLNPIHINVPADPSSAAFFAAAASIISGSHIELKDVLINPTRDGFFRKLKEMGAKVEYKNKRDEAGEIVADIYISYHELKGVKVEPQEVPSMIDEIPLLAIIATQAEGETVITGAHELRVKESDRIKSVIENFKRLGLEAEELPDGMIIRGKQKVKGGIVDSYKDHRIAMGFAILGLVSEEGITIKDADCVYISYPEFFNHLEKVSK.

3-phosphoshikimate contacts are provided by Lys-21, Ser-22, and Arg-26. Lys-21 provides a ligand contact to phosphoenolpyruvate. The phosphoenolpyruvate site is built by Gly-93 and Arg-121. 3-phosphoshikimate-binding residues include Ser-166, Gln-168, Asp-318, and Lys-345. Gln-168 provides a ligand contact to phosphoenolpyruvate. Catalysis depends on Asp-318, which acts as the Proton acceptor. Phosphoenolpyruvate contacts are provided by Arg-349 and Arg-391.

The protein belongs to the EPSP synthase family. Monomer.

The protein resides in the cytoplasm. It carries out the reaction 3-phosphoshikimate + phosphoenolpyruvate = 5-O-(1-carboxyvinyl)-3-phosphoshikimate + phosphate. Its pathway is metabolic intermediate biosynthesis; chorismate biosynthesis; chorismate from D-erythrose 4-phosphate and phosphoenolpyruvate: step 6/7. In terms of biological role, catalyzes the transfer of the enolpyruvyl moiety of phosphoenolpyruvate (PEP) to the 5-hydroxyl of shikimate-3-phosphate (S3P) to produce enolpyruvyl shikimate-3-phosphate and inorganic phosphate. The chain is 3-phosphoshikimate 1-carboxyvinyltransferase from Sulfurihydrogenibium sp. (strain YO3AOP1).